A 669-amino-acid chain; its full sequence is 5-taurinomethyluridine-[tRNA] synthase subunit MTO1, mitochondrial (669 aa).

Residues Met-1 to Arg-25 constitute a mitochondrion transit peptide. FAD contacts are provided by residues Gly-42–Gly-47, Val-154, Ser-217, and Gln-406. Lys-507 carries the N6-methyllysine modification.

It belongs to the MnmG family. As to quaternary structure, homodimer; forms a dimer in the presence of potassium. Interacts with GTPBP3; forms the GTPBP3-MTO1 complex composed of homodimers of GTPBP3 and MTO1. Requires FAD as cofactor. In terms of tissue distribution, ubiquitously expressed in various tissues, but with markedly elevated expression in tissues of high metabolic rates.

It is found in the mitochondrion. The catalysed reaction is 5,10-methylenetetrahydrofolate + uridine(34) in tRNA + taurine + GTP + A + H2O = 5-taurinomethyluridine(34) in tRNA + 7,8-dihydrofolate + GDP + AH2 + phosphate + H(+). Its function is as follows. Component of the GTPBP3-MTO1 complex that catalyzes the 5-taurinomethyluridine (taum(5)U) modification at the 34th wobble position (U34) of mitochondrial tRNAs (mt-tRNAs), which plays a role in mt-tRNA decoding and mitochondrial translation. Taum(5)U formation on mammalian mt-tRNA requires the presence of both GTPBP3-mediated GTPase activity and MTO1 catalytic activity. In Mus musculus (Mouse), this protein is 5-taurinomethyluridine-[tRNA] synthase subunit MTO1, mitochondrial.